The sequence spans 79 residues: Acyl carrier protein (79 aa).

In terms of domain architecture, Carrier spans 2–77 (DNIEQRVKKI…LAIDFAKSKA (76 aa)). The residue at position 37 (Ser-37) is an O-(pantetheine 4'-phosphoryl)serine.

This sequence belongs to the acyl carrier protein (ACP) family. 4'-phosphopantetheine is transferred from CoA to a specific serine of apo-ACP by AcpS. This modification is essential for activity because fatty acids are bound in thioester linkage to the sulfhydryl of the prosthetic group.

It localises to the cytoplasm. It functions in the pathway lipid metabolism; fatty acid biosynthesis. Functionally, carrier of the growing fatty acid chain in fatty acid biosynthesis. The polypeptide is Acyl carrier protein (Polynucleobacter necessarius subsp. necessarius (strain STIR1)).